A 98-amino-acid chain; its full sequence is Integration host factor subunit alpha (98 aa).

The tract at residues 49–71 (FGNFDLRDKNQRPGRNPKTGEDI) is disordered.

This sequence belongs to the bacterial histone-like protein family. In terms of assembly, heterodimer of an alpha and a beta chain.

Its function is as follows. This protein is one of the two subunits of integration host factor, a specific DNA-binding protein that functions in genetic recombination as well as in transcriptional and translational control. The protein is Integration host factor subunit alpha of Shewanella amazonensis (strain ATCC BAA-1098 / SB2B).